Consider the following 90-residue polypeptide: Photosystem I reaction center subunit PsaK 2 (90 aa).

A run of 2 helical transmembrane segments spans residues 20-42 (LSVG…FAIQ) and 67-89 (LATM…SSGI).

Belongs to the PsaG/PsaK family.

The protein localises to the cellular thylakoid membrane. This Synechocystis sp. (strain ATCC 27184 / PCC 6803 / Kazusa) protein is Photosystem I reaction center subunit PsaK 2 (psaK2).